A 1239-amino-acid chain; its full sequence is Structural polyprotein (1239 aa).

A necessary for nucleocapsid assembly and virus assembly region spans residues 1–35; it reads MFPYPTLNYPPMAPINPMAYRDPNPPRQVAPFRPP. The disordered stretch occupies residues 1–101; that stretch reads MFPYPTLNYP…RKPKPGKRQR (101 aa). Residues 23–34 show a composition bias toward pro residues; that stretch reads PNPPRQVAPFRP. A host transcription inhibition region spans residues 36–69; the sequence is LAAQIEDLRRSIANLTLKQRAPNPPAGPPAKRKK. Positions 43–50 match the Supraphysiological nuclear export signal motif; it reads LRRSIANL. A glycan (N-linked (GlcNAc...) asparagine; by host) is linked at asparagine 49. The Nuclear localization signal motif lies at 66-69; sequence KRKK. Residues 79–101 show a composition bias toward basic residues; that stretch reads KKKRPPPPAKKQKRKPKPGKRQR. Residues 81-111 are binding to the viral RNA; sequence KRPPPPAKKQKRKPKPGKRQRMCMKLESDKT. The tract at residues 96 to 110 is ribosome-binding; sequence PGKRQRMCMKLESDK. Phosphoserine is present on serine 108. In terms of domain architecture, Peptidase S3 spans 110 to 259; the sequence is KTFPIMLNGQ…KDTPEGSEPW (150 aa). Position 111 is a phosphothreonine (threonine 111). Histidine 136 (charge relay system) is an active-site residue. The interaction with spike glycoprotein E2 stretch occupies residues 152–157; sequence KKASIY. Active-site charge relay system residues include aspartate 158 and serine 210. The tract at residues 244-248 is interaction with spike glycoprotein E2; it reads QKGVT. A functions as an uncleaved signal peptide for the precursor of protein E3/E2 region spans residues 260 to 271; it reads SLATVMCVLANI. Over 260–681 the chain is Extracellular; it reads SLATVMCVLA…HVVVVYYYNR (422 aa). Intrachain disulfides connect cysteine 266-cysteine 275, cysteine 280-cysteine 284, cysteine 283-cysteine 315, cysteine 341-cysteine 444, cysteine 344-cysteine 349, cysteine 411-cysteine 425, cysteine 472-cysteine 585, cysteine 521-cysteine 545, and cysteine 523-cysteine 539. N-linked (GlcNAc...) asparagine; by host glycosylation occurs at asparagine 270. The N-linked (GlcNAc...) asparagine; by host glycan is linked to asparagine 637. A helical transmembrane segment spans residues 682 to 702; the sequence is YPLTTIIGLCTCVAIIMVSCD. At 703–742 the chain is on the cytoplasmic side; the sequence is HPCGSFSGLRNLCITPYKLAPNAQVPILLALLCCIKPTRA. Cysteine 705 carries S-palmitoyl cysteine; by host lipidation. The interaction with the capsid protein stretch occupies residues 710 to 714; sequence GLRNL. Residues 714–734 form a transient transmembrane before p62-6K protein processing region; that stretch reads LCITPYKLAPNAQVPILLALL. S-palmitoyl cysteine; by host attachment occurs at residues cysteine 715, cysteine 735, and cysteine 736. Cysteine 715 and cysteine 736 are oxidised to a cystine. Topologically, residues 743–754 are extracellular; the sequence is DDTLQVLNYLWN. The helical transmembrane segment at 755-775 threads the bilayer; it reads NNQNFFWMQTLIPLAALIVCM. Arginine 776 is a topological domain (cytoplasmic). A helical transmembrane segment spans residues 777–797; sequence MLAALFCCGPAFLLVCGAWAA. Residues 798–1215 lie on the Extracellular side of the membrane; that stretch reads AYEHTAVMPN…WSWLKVLVGG (418 aa). 4 disulfides stabilise this stretch: cysteine 847–cysteine 912, cysteine 860–cysteine 892, cysteine 861–cysteine 894, and cysteine 866–cysteine 876. The segment at 882 to 899 is E1 fusion peptide loop; it reads VYPFMWGGAYCFCDTENT. N-linked (GlcNAc...) asparagine; by host glycosylation is found at asparagine 932 and asparagine 1069. Intrachain disulfides connect cysteine 1058/cysteine 1070, cysteine 1100/cysteine 1175, and cysteine 1105/cysteine 1179. A helical transmembrane segment spans residues 1216–1236; it reads TSAFIVLGLIATAVVALVLFF. At 1237 to 1239 the chain is on the cytoplasmic side; the sequence is HRH.

As to quaternary structure, homodimer. Homomultimer. Interacts with host karyopherin KPNA4; this interaction allows the nuclear import of the viral capsid protein. Interacts with spike glycoprotein E2. Interacts with host IRAK1; the interaction leads to inhibition of IRAK1-dependent signaling. Part of a tetrameric complex composed of host CRM1, host importin alpha/beta dimer and the viral capsid; this complex blocks the receptor-mediated transport through the nuclear pore. Interacts with host phosphatase PPP1CA; this interaction dephosphorylates the capsid protein, which increases its ability to bind to the viral genome. In terms of assembly, the precursor of protein E3/E2 and E1 form a heterodimer shortly after synthesis. The precursor of protein E3/E2 and E1 form a heterodimer shortly after synthesis. Processing of the precursor of protein E3/E2 into E2 and E3 results in a heterodimer of the spike glycoproteins E2 and E1. Spike at virion surface are constituted of three E2-E1 heterodimers. After target cell attachment and endocytosis, E1 change conformation to form homotrimers. E2-E1 heterodimers interact with host VLDLR or LRP8/APOER2 to mediate viral entry. Interacts with 6K protein. As to quaternary structure, interacts with spike glycoprotein E1. Processing of the precursor of protein E3/E2 into E2 and E3 results in a heterodimer of the spike glycoproteins E2 and E1. Spike at virion surface are constituted of a trimer of E2-E1 heterodimers. Interacts with 6K protein. E2-E1 heterodimers interact with host VLDLR or LRP8/APOER2 to mediate viral entry. Interacts (via E2-A) with host VLDLR (via class A repeats); this interaction mediates viral entry into host cell. Interacts with host LRP8/APOER2 (via class A repeats); this interaction mediates viral entry into host cell. In terms of assembly, oligomer. Interacts with spike glycoprotein E1. Interacts with spike glycoprotein E2. In terms of processing, structural polyprotein: Specific enzymatic cleavages in vivo yield mature proteins. Capsid protein is auto-cleaved during polyprotein translation, unmasking a signal peptide at the N-terminus of the precursor of E3/E2. The remaining polyprotein is then targeted to the host endoplasmic reticulum, where host signal peptidase cleaves it into pE2, 6K and E1 proteins. pE2 is further processed to mature E3 and E2 by host furin in trans-Golgi vesicle. Phosphorylated on serine and threonine residues. Post-translationally, palmitoylated via thioester bonds. These palmitoylations may induce disruption of the C-terminus transmembrane. This would result in the reorientation of E2 C-terminus from lumenal to cytoplasmic side. In terms of processing, N-glycosylated. Palmitoylated via thioester bonds.

The protein resides in the virion. The protein localises to the host cytoplasm. Its subcellular location is the host cell membrane. It localises to the host nucleus. It is found in the virion membrane. The protein resides in the host Golgi apparatus. The protein localises to the host trans-Golgi network. Its subcellular location is the host endoplasmic reticulum. The enzyme catalyses Autocatalytic release of the core protein from the N-terminus of the togavirus structural polyprotein by hydrolysis of a -Trp-|-Ser- bond.. Functionally, forms an icosahedral capsid with a T=4 symmetry composed of 240 copies of the capsid protein surrounded by a lipid membrane through which penetrate 80 spikes composed of trimers of E1-E2 heterodimers. The capsid protein binds to the viral RNA genome at a site adjacent to a ribosome binding site for viral genome translation following genome release. Possesses a protease activity that results in its autocatalytic cleavage from the nascent structural protein. Following its self-cleavage, the capsid protein transiently associates with ribosomes, and within several minutes the protein binds to viral RNA and rapidly assembles into icosahedric core particles. The resulting nucleocapsid eventually associates with the cytoplasmic domain of the spike glycoprotein E2 at the cell membrane, leading to budding and formation of mature virions. In case of infection, new virions attach to target cells and after clathrin-mediated endocytosis their membrane fuses with the host endosomal membrane. This leads to the release of the nucleocapsid into the cytoplasm, followed by an uncoating event necessary for the genomic RNA to become accessible. The uncoating might be triggered by the interaction of capsid proteins with ribosomes. Binding of ribosomes would release the genomic RNA since the same region is genomic RNA-binding and ribosome-binding. Specifically inhibits interleukin-1 receptor-associated kinase 1/IRAK1-dependent signaling during viral entry, representing a means by which the alphaviruses may evade innate immune detection and activation prior to viral gene expression. Inhibits host transcription. Forms a tetrameric complex with XPO1/CRM1 and the nuclear import receptor importin. This complex blocks the central channel of host nuclear pores thereby inhibiting the receptor-mediated nuclear transport and thus the host mRNA and rRNA transcription. The inhibition of transcription is linked to a cytopathic effect on the host cell. In terms of biological role, provides the signal sequence for the translocation of the precursor of protein E3/E2 to the host endoplasmic reticulum. Furin-cleaved E3 remains associated with spike glycoprotein E1 and mediates pH protection of the latter during the transport via the secretory pathway. After virion release from the host cell, the assembly protein E3 is gradually released in the extracellular space. Its function is as follows. Plays a role in viral attachment to target host cell, by binding to the cell receptors VLDLR or LRP8/APOER2. Synthesized as a p62 precursor which is processed by furin at the cell membrane just before virion budding, giving rise to E2-E1 heterodimer. The p62-E1 heterodimer is stable, whereas E2-E1 is unstable and dissociate at low pH. p62 is processed at the last step, presumably to avoid E1 fusion activation before its final export to cell surface. E2 C-terminus contains a transitory transmembrane that would be disrupted by palmitoylation, resulting in reorientation of the C-terminal tail from lumenal to cytoplasmic side. This step is critical since E2 C-terminus is involved in budding by interacting with capsid proteins. This release of E2 C-terminus in cytoplasm occurs lately in protein export, and precludes premature assembly of particles at the endoplasmic reticulum membrane. Acts as a viroporin that participates in virus glycoprotein processing and transport to the plasma membrane, cell permeabilization and budding of viral particles. Disrupts the calcium homeostasis of the cell, probably at the endoplasmic reticulum level. This leads to cytoplasmic calcium elevation. Because of its lipophilic properties, the 6K protein is postulated to influence the selection of lipids that interact with the transmembrane domains of the glycoproteins, which, in turn, affects the deformability of the bilayer required for the extreme curvature that occurs as budding proceeds. Present in low amount in virions, about 3% compared to viral glycoproteins. Functionally, class II viral fusion protein. Fusion activity is inactive as long as E1 is bound to E2 in mature virion. After virus attachment to target cell via host VLDLR or LRP8/APOER2 and endocytosis, acidification of the endosome induces dissociation of E1/E2 heterodimer and concomitant trimerization of the E1 subunits. This E1 trimer is fusion active, and promotes release of viral nucleocapsid in cytoplasm after endosome and viral membrane fusion. Efficient fusion requires the presence of cholesterol and sphingolipid in the target membrane. The polypeptide is Structural polyprotein (Aedes (Human)).